The sequence spans 885 residues: Protein PTHB1 (885 aa).

The seven-bladed beta-propeller stretch occupies residues 1–406 (MSLFKARDWW…LQGVWPLTEQ (406 aa)). Residues 684–764 (RDKTPAPLQH…FLPLQEDTQE (81 aa)) form an interaction with LZTL1 region.

As to quaternary structure, part of BBSome complex, that contains BBS1, BBS2, BBS4, BBS5, BBS7, BBS8/TTC8, BBS9 and BBIP10. Interacts with LZTL1; the interaction mediates the association of LZTL1 with the BBsome complex and regulates BBSome ciliary trafficking.

The protein localises to the cell projection. It localises to the cilium membrane. Its subcellular location is the cytoplasm. The protein resides in the cytoskeleton. It is found in the microtubule organizing center. The protein localises to the centrosome. It localises to the centriolar satellite. Its function is as follows. The BBSome complex is thought to function as a coat complex required for sorting of specific membrane proteins to the primary cilia. The BBSome complex is required for ciliogenesis but is dispensable for centriolar satellite function. This ciliogenic function is mediated in part by the Rab8 GDP/GTP exchange factor, which localizes to the basal body and contacts the BBSome. Rab8(GTP) enters the primary cilium and promotes extension of the ciliary membrane. Firstly the BBSome associates with the ciliary membrane and binds to RAB3IP/Rabin8, the guanosyl exchange factor (GEF) for Rab8 and then the Rab8-GTP localizes to the cilium and promotes docking and fusion of carrier vesicles to the base of the ciliary membrane. Required for proper BBSome complex assembly and its ciliary localization. The sequence is that of Protein PTHB1 (Bbs9) from Mus musculus (Mouse).